The sequence spans 206 residues: MELKVTTLEGKEAGSVQLSDAIFGLEPRQDIVQRCVIWQLAKRQAGTHKAKGRAEIWRTGKKMYKQKGTGGARHGSQRVPQFRGGGRAFGPVVRSHAIDLPKKVRALALRHALSAKAKGGGLIVIDKAELEAAKTKALVGAFSGLGLTNALIIDGAEVNNGFATAARNIPNIDVLPVQGINVYDIVRRRKLVLTKAALDALEARFK.

The protein belongs to the universal ribosomal protein uL4 family. As to quaternary structure, part of the 50S ribosomal subunit.

Its function is as follows. One of the primary rRNA binding proteins, this protein initially binds near the 5'-end of the 23S rRNA. It is important during the early stages of 50S assembly. It makes multiple contacts with different domains of the 23S rRNA in the assembled 50S subunit and ribosome. In terms of biological role, forms part of the polypeptide exit tunnel. The chain is Large ribosomal subunit protein uL4 from Rhodopseudomonas palustris (strain BisB5).